Consider the following 181-residue polypeptide: Cyclic AMP-dependent transcription factor ATF-3 (181 aa).

The disordered stretch occupies residues 76 to 97; that stretch reads VTKAEVAPEEDERKKRRRERNK. Residue Lys-78 forms a Glycyl lysine isopeptide (Lys-Gly) (interchain with G-Cter in SUMO2) linkage. In terms of domain architecture, bZIP spans 86 to 149; sequence DERKKRRRER…QHLIYMLNLH (64 aa). A basic motif region spans residues 88–110; that stretch reads RKKRRRERNKIAAAKCRNKKKEK. The tract at residues 114-142 is leucine-zipper; that stretch reads LQKESEKLESVNAELKAQIEELKNEKQHL. Thr-162 bears the Phosphothreonine mark. Residue Lys-175 forms a Glycyl lysine isopeptide (Lys-Gly) (interchain with G-Cter in SUMO2) linkage.

The protein belongs to the bZIP family. ATF subfamily. As to quaternary structure, binds DNA as a homodimer or a heterodimer. Interacts with KAT5; promoting KAT5 autoacetylation and KAT5 deubiquitination by USP7.

It localises to the nucleus. This protein binds the cAMP response element (CRE) (consensus: 5'-GTGACGT[AC][AG]-3'), a sequence present in many viral and cellular promoters. Represses transcription from promoters with ATF sites. It may repress transcription by stabilizing the binding of inhibitory cofactors at the promoter. This is Cyclic AMP-dependent transcription factor ATF-3 (ATF3) from Bos taurus (Bovine).